A 99-amino-acid polypeptide reads, in one-letter code: Nucleoid-associated protein SEQ_0368 (99 aa).

This sequence belongs to the YbaB/EbfC family. In terms of assembly, homodimer.

It localises to the cytoplasm. The protein resides in the nucleoid. Functionally, binds to DNA and alters its conformation. May be involved in regulation of gene expression, nucleoid organization and DNA protection. The sequence is that of Nucleoid-associated protein SEQ_0368 from Streptococcus equi subsp. equi (strain 4047).